The following is a 637-amino-acid chain: MASFSFFGTIPSSPTKASVFSLPVSVTTLPSFPRRRATRVSVSANSKKDQDRTASRRENPSTFSSKYAPNVPRSGADILVEALERQGVDVVFAYPGGASMEIHQALTRSNTIRNVLPRHEQGGIFAAEGYARSSGKPGICIATSGPGAMNLVSGLADALFDSVPLIAITGQVPRRMIGTMAFQETPVVEVTRTITKHNYLVMEVDDIPRIVREAFFLATSVRPGPVLIDVPKDVQQQFAIPNWEQPMRLPLYMSTMPKPPKVSHLEQILRLVSESKRPVLYVGGGCLNSSEELRRFVELTGIPVASTFMGLGSYPCDDEEFSLQMLGMHGTVYANYAVEYSDLLLAFGVRFDDRVTGKLEAFASRAKIVHIDIDSTEIGKNKTPHVSVCCDVQLALQGMNEVLENRRDVLDFGEWRCELNEQRLKFPLRYKTFGEEIPPQYAIQLLDELTDGKAIITTGVGQHQMWAAQFYRFKKPRQWLSSGGLGAMGFGLPAAMGAAIANPGAVVVDIDGDGSFIMNIQELATIRVENLPVKVLLINNQHLGMVLQWEDHFYAANRADSFLGDPANPEAVFPDMLLFAASCGIPAARVTRREDLREAIQTMLDTPGPFLLDVVCPHQDHVLPLIPSGGTFKDIIV.

Residues 1 to 73 (MASFSFFGTI…SSKYAPNVPR (73 aa)) constitute a chloroplast transit peptide. Residues 35–69 (RRATRVSVSANSKKDQDRTASRRENPSTFSSKYAP) are disordered. The span at 46–59 (SKKDQDRTASRREN) shows a compositional bias: basic and acidic residues. A thiamine diphosphate-binding site is contributed by Glu-120. FAD is bound by residues Arg-222, 329–350 (HGTV…FGVR), and 372–391 (DIDS…VCCD). The interval 462 to 542 (QHQMWAAQFY…VKVLLINNQH (81 aa)) is thiamine pyrophosphate binding. 2 residues coordinate Mg(2+): Asp-513 and Asn-540.

Belongs to the TPP enzyme family. The cofactor is Mg(2+). Requires thiamine diphosphate as cofactor.

The protein localises to the plastid. Its subcellular location is the chloroplast. The catalysed reaction is 2 pyruvate + H(+) = (2S)-2-acetolactate + CO2. It participates in amino-acid biosynthesis; L-isoleucine biosynthesis; L-isoleucine from 2-oxobutanoate: step 1/4. The protein operates within amino-acid biosynthesis; L-valine biosynthesis; L-valine from pyruvate: step 1/4. The protein is Acetolactate synthase 2, chloroplastic of Brassica napus (Rape).